Consider the following 239-residue polypeptide: Pyridoxal 5'-phosphate synthase subunit PdxS (239 aa).

Asp-21 provides a ligand contact to D-ribose 5-phosphate. Lys-78 (schiff-base intermediate with D-ribose 5-phosphate) is an active-site residue. Gly-150 provides a ligand contact to D-ribose 5-phosphate. A D-glyceraldehyde 3-phosphate-binding site is contributed by Arg-162. D-ribose 5-phosphate contacts are provided by residues Gly-211 and 232 to 233 (GS).

It belongs to the PdxS/SNZ family. In the presence of PdxT, forms a dodecamer of heterodimers.

It catalyses the reaction aldehydo-D-ribose 5-phosphate + D-glyceraldehyde 3-phosphate + L-glutamine = pyridoxal 5'-phosphate + L-glutamate + phosphate + 3 H2O + H(+). The protein operates within cofactor biosynthesis; pyridoxal 5'-phosphate biosynthesis. In terms of biological role, catalyzes the formation of pyridoxal 5'-phosphate from ribose 5-phosphate (RBP), glyceraldehyde 3-phosphate (G3P) and ammonia. The ammonia is provided by the PdxT subunit. Can also use ribulose 5-phosphate and dihydroxyacetone phosphate as substrates, resulting from enzyme-catalyzed isomerization of RBP and G3P, respectively. The protein is Pyridoxal 5'-phosphate synthase subunit PdxS of Francisella tularensis.